We begin with the raw amino-acid sequence, 200 residues long: Ribosomal RNA large subunit methyltransferase E (200 aa).

S-adenosyl-L-methionine is bound by residues glycine 49, tryptophan 51, aspartate 69, aspartate 87, and aspartate 111. Lysine 151 acts as the Proton acceptor in catalysis.

This sequence belongs to the class I-like SAM-binding methyltransferase superfamily. RNA methyltransferase RlmE family.

It localises to the cytoplasm. The enzyme catalyses uridine(2552) in 23S rRNA + S-adenosyl-L-methionine = 2'-O-methyluridine(2552) in 23S rRNA + S-adenosyl-L-homocysteine + H(+). In terms of biological role, specifically methylates the uridine in position 2552 of 23S rRNA at the 2'-O position of the ribose in the fully assembled 50S ribosomal subunit. This chain is Ribosomal RNA large subunit methyltransferase E, found in Lawsonia intracellularis (strain PHE/MN1-00).